A 545-amino-acid chain; its full sequence is MTTRYIFVTGGVVSSLGKGIAAASLAAILEARGLNVTIMKLDPYINVDPGTMSPTQHGEVFVTEDGAETDLDLGHYERFIRTKMNRRNNFTTGRIYEEVLRKERRGDYLGATIQVIPHITNAIKEKVLAGGEGHDVAIVEIGGTVGDIESLPFLESIRQLGVELGRDRTLFMHLTLVPFLGAAGEVKTKPTQHSVKELRSIGIAPDVLICRGDRAIPANERAKISLFCNVEERAVISLKDVDSIYKIPALLRSQGLDDLVVKRFGLECREADLSEWENVIYQEANPNGEVVIGMVGKYIELPDAYKSVNEALKHAGLKNRVSVTIKYIDSQTVEAKGDEVLQGLDGILVPGGFGERGVEGKILAAKFARENKLPYFGICLGMQVALIEFARNVAGMTDAHSTEFNKETPFPVVGLITEWVDEEGNVEQRHEASDLGGTMRLGAQLCHLLEGSKAAQAYKGNSCIERHRHRYEVNNKYRERLEQAGMVFSGLSSDRKLVEMIELKDHPWFVAGQFHPEFTSTPRDGHPLFEGFIAAASAHQKRDLK.

Residues 1 to 266 form an amidoligase domain region; the sequence is MTTRYIFVTG…DDLVVKRFGL (266 aa). Ser-14 is a binding site for CTP. Ser-14 is a binding site for UTP. Residues 15–20 and Asp-72 contribute to the ATP site; that span reads SLGKGI. Residues Asp-72 and Glu-140 each contribute to the Mg(2+) site. Residues 147–149, 187–192, and Lys-223 contribute to the CTP site; these read DIE and KTKPTQ. UTP is bound by residues 187-192 and Lys-223; that span reads KTKPTQ. An ATP-binding site is contributed by 239–241; that stretch reads KDV. The region spanning 291–542 is the Glutamine amidotransferase type-1 domain; it reads VIGMVGKYIE…IAAASAHQKR (252 aa). Gly-352 contacts L-glutamine. Cys-379 acts as the Nucleophile; for glutamine hydrolysis in catalysis. Residues 380 to 383, Glu-403, and Arg-470 contribute to the L-glutamine site; that span reads LGMQ. Active-site residues include His-515 and Glu-517.

Belongs to the CTP synthase family. In terms of assembly, homotetramer.

It carries out the reaction UTP + L-glutamine + ATP + H2O = CTP + L-glutamate + ADP + phosphate + 2 H(+). The catalysed reaction is L-glutamine + H2O = L-glutamate + NH4(+). It catalyses the reaction UTP + NH4(+) + ATP = CTP + ADP + phosphate + 2 H(+). The protein operates within pyrimidine metabolism; CTP biosynthesis via de novo pathway; CTP from UDP: step 2/2. With respect to regulation, allosterically activated by GTP, when glutamine is the substrate; GTP has no effect on the reaction when ammonia is the substrate. The allosteric effector GTP functions by stabilizing the protein conformation that binds the tetrahedral intermediate(s) formed during glutamine hydrolysis. Inhibited by the product CTP, via allosteric rather than competitive inhibition. Its function is as follows. Catalyzes the ATP-dependent amination of UTP to CTP with either L-glutamine or ammonia as the source of nitrogen. Regulates intracellular CTP levels through interactions with the four ribonucleotide triphosphates. The chain is CTP synthase from Shewanella putrefaciens (strain CN-32 / ATCC BAA-453).